Here is a 24-residue protein sequence, read N- to C-terminus: Humanin-like 6 (24 aa).

Belongs to the humanin family. As to expression, expressed in skeletal muscle and testis.

Its subcellular location is the secreted. It localises to the cytoplasm. Its function is as follows. Plays a role as a neuroprotective and antiapoptotic factor. The protein is Humanin-like 6 of Homo sapiens (Human).